A 769-amino-acid chain; its full sequence is Transferrin receptor protein 1 (769 aa).

Residues 1 to 70 (MMDQARSAFS…KPKRFNGFIC (70 aa)) lie on the Cytoplasmic side of the membrane. The tract at residues 1-70 (MMDQARSAFS…KPKRFNGFIC (70 aa)) is mediates interaction with SH3BP4. Phosphoserine is present on residues Ser10 and Ser19. Residue Tyr20 is modified to Phosphotyrosine. An Endocytosis signal motif is present at residues 20-23 (YTRF). Thr21 carries the phosphothreonine modification. Ser24 is subject to Phosphoserine. The Stop-transfer sequence signature appears at 61-64 (KPKR). Cys70 carries S-palmitoyl cysteine lipidation. Residues 71–91 (YGTIAIILFFLIGFMIGYLGY) traverse the membrane as a helical; Signal-anchor for type II membrane protein segment. Residues 92–769 (CKRVEAKSEC…GDIWDIDNEF (678 aa)) are Extracellular-facing. The O-linked (GalNAc...) threonine glycan is linked to Thr107. The PA domain maps to 232 to 322 (SKAATVTGRL…GTGDPYTPGF (91 aa)). N-linked (GlcNAc...) asparagine glycosylation is found at Asn260 and Asn326. A ligand-binding region spans residues 578-769 (TMDVYEKLIQ…GDIWDIDNEF (192 aa)). The short motif at 655–657 (RGD) is the Cell attachment site element. 2 N-linked (GlcNAc...) asparagine glycosylation sites follow: Asn731 and Asn736.

It belongs to the peptidase M28 family. M28B subfamily. Homodimer; disulfide-linked. Binds one transferrin molecule per subunit. Interacts with SH3BP4. Homodimer; disulfide-linked. Binds one transferrin or HFE molecule per subunit. Binds the HLA class II histocompatibility antigen, DR1. Interacts with SH3BP3. Interacts with STEAP3; facilitates TFRC endocytosis in erythroid precursor cells. In terms of processing, stearoylated by ZDHHC6 which inhibits TFRC-mediated activation of the JNK pathway and promotes mitochondrial fragmentation. Stearoylation does not affect iron uptake. N- and O-glycosylated, phosphorylated and palmitoylated.

It is found in the cell membrane. The protein localises to the melanosome. Functionally, cellular uptake of iron occurs via receptor-mediated endocytosis of ligand-occupied transferrin receptor into specialized endosomes. Endosomal acidification leads to iron release. The apotransferrin-receptor complex is then recycled to the cell surface with a return to neutral pH and the concomitant loss of affinity of apotransferrin for its receptor. Transferrin receptor is necessary for development of erythrocytes and the nervous system. Positively regulates T and B cell proliferation through iron uptake. Acts as a lipid sensor that regulates mitochondrial fusion by regulating activation of the JNK pathway. When dietary levels of stearate (C18:0) are low, promotes activation of the JNK pathway, resulting in HUWE1-mediated ubiquitination and subsequent degradation of the mitofusin MFN2 and inhibition of mitochondrial fusion. When dietary levels of stearate (C18:0) are high, TFRC stearoylation inhibits activation of the JNK pathway and thus degradation of the mitofusin MFN2. Mediates uptake of NICOL1 into fibroblasts where it may regulate extracellular matrix production. This is Transferrin receptor protein 1 (TFRC) from Felis catus (Cat).